Reading from the N-terminus, the 37-residue chain is Large ribosomal subunit protein bL36c (37 aa).

The protein belongs to the bacterial ribosomal protein bL36 family.

The protein localises to the plastid. It localises to the chloroplast. The chain is Large ribosomal subunit protein bL36c from Phaseolus angularis (Azuki bean).